The primary structure comprises 393 residues: Phosphoglycerate kinase (393 aa).

Substrate contacts are provided by residues 21–23, R37, 60–63, R115, and R148; these read DLN and HLGR. ATP-binding positions include K199, E321, and 347–350; that span reads GGDT.

It belongs to the phosphoglycerate kinase family. As to quaternary structure, monomer.

The protein localises to the cytoplasm. The enzyme catalyses (2R)-3-phosphoglycerate + ATP = (2R)-3-phospho-glyceroyl phosphate + ADP. Its pathway is carbohydrate degradation; glycolysis; pyruvate from D-glyceraldehyde 3-phosphate: step 2/5. The sequence is that of Phosphoglycerate kinase from Dechloromonas aromatica (strain RCB).